We begin with the raw amino-acid sequence, 293 residues long: Small ribosomal subunit biogenesis GTPase RsgA (293 aa).

The CP-type G domain occupies 63 to 223 (KNWLVRPPIA…VADTPGFSAL (161 aa)). Residues 112-115 (NKMD) and 166-174 (GQSGVGKSS) contribute to the GTP site. Zn(2+) contacts are provided by cysteine 247, cysteine 252, histidine 254, and cysteine 260.

The protein belongs to the TRAFAC class YlqF/YawG GTPase family. RsgA subfamily. As to quaternary structure, monomer. Associates with 30S ribosomal subunit, binds 16S rRNA. The cofactor is Zn(2+).

It localises to the cytoplasm. One of several proteins that assist in the late maturation steps of the functional core of the 30S ribosomal subunit. Helps release RbfA from mature subunits. May play a role in the assembly of ribosomal proteins into the subunit. Circularly permuted GTPase that catalyzes slow GTP hydrolysis, GTPase activity is stimulated by the 30S ribosomal subunit. This is Small ribosomal subunit biogenesis GTPase RsgA from Geobacillus sp. (strain WCH70).